A 605-amino-acid chain; its full sequence is Isocitrate dehydrogenase kinase/phosphatase (605 aa).

Residues 327–333 (APGIKGL) and K348 contribute to the ATP site. The active site involves D383.

Belongs to the AceK family.

The protein localises to the cytoplasm. It carries out the reaction L-seryl-[isocitrate dehydrogenase] + ATP = O-phospho-L-seryl-[isocitrate dehydrogenase] + ADP + H(+). Bifunctional enzyme which can phosphorylate or dephosphorylate isocitrate dehydrogenase (IDH) on a specific serine residue. This is a regulatory mechanism which enables bacteria to bypass the Krebs cycle via the glyoxylate shunt in response to the source of carbon. When bacteria are grown on glucose, IDH is fully active and unphosphorylated, but when grown on acetate or ethanol, the activity of IDH declines drastically concomitant with its phosphorylation. The polypeptide is Isocitrate dehydrogenase kinase/phosphatase (Burkholderia orbicola (strain MC0-3)).